We begin with the raw amino-acid sequence, 595 residues long: Inactive glycosyltransferase 25 family member 3 (595 aa).

An N-terminal signal peptide occupies residues 1–22 (MRAARAAPLLQLLLLLGPWLEA). Residues N75, N153, N237, and N360 are each glycosylated (N-linked (GlcNAc...) asparagine). The tract at residues 548-595 (DTETSSPWDDDSGRLISWSGSQKTLRSPRLDLTGSSGHSLQPQPRDEL) is disordered. The segment covering 580 to 589 (TGSSGHSLQP) has biased composition (polar residues). Positions 592–595 (RDEL) match the Prevents secretion from ER motif.

It belongs to the glycosyltransferase 25 family. In terms of tissue distribution, ubiquitous. Highly expressed in secretory and nervous tissues.

Its subcellular location is the endoplasmic reticulum lumen. Probable cell adhesion protein involved in leukocyte transmigration across the blood-brain barrier. Does not express any beta-galactosyltransferase activity in vitro. In Homo sapiens (Human), this protein is Inactive glycosyltransferase 25 family member 3 (CERCAM).